Here is a 424-residue protein sequence, read N- to C-terminus: Histidine--tRNA ligase (424 aa).

It belongs to the class-II aminoacyl-tRNA synthetase family. In terms of assembly, homodimer.

The protein localises to the cytoplasm. The catalysed reaction is tRNA(His) + L-histidine + ATP = L-histidyl-tRNA(His) + AMP + diphosphate + H(+). In Shewanella frigidimarina (strain NCIMB 400), this protein is Histidine--tRNA ligase.